We begin with the raw amino-acid sequence, 353 residues long: Glutamine synthetase nodule isozyme (353 aa).

The 81-residue stretch at 19 to 99 folds into the GS beta-grasp domain; that stretch reads IIAEYIWVGG…VMCDTYTPAG (81 aa). Residues 106–353 enclose the GS catalytic domain; the sequence is KRHAAAKIFS…TSMIAETTLL (248 aa).

It belongs to the glutamine synthetase family. As to quaternary structure, homooctamer.

The protein resides in the cytoplasm. The enzyme catalyses L-glutamate + NH4(+) + ATP = L-glutamine + ADP + phosphate + H(+). The polypeptide is Glutamine synthetase nodule isozyme (Lupinus luteus (European yellow lupine)).